The primary structure comprises 241 residues: 1-(5-phosphoribosyl)-5-[(5-phosphoribosylamino)methylideneamino] imidazole-4-carboxamide isomerase (241 aa).

Catalysis depends on D8, which acts as the Proton acceptor. D127 (proton donor) is an active-site residue.

This sequence belongs to the HisA/HisF family.

The protein localises to the cytoplasm. The enzyme catalyses 1-(5-phospho-beta-D-ribosyl)-5-[(5-phospho-beta-D-ribosylamino)methylideneamino]imidazole-4-carboxamide = 5-[(5-phospho-1-deoxy-D-ribulos-1-ylimino)methylamino]-1-(5-phospho-beta-D-ribosyl)imidazole-4-carboxamide. It functions in the pathway amino-acid biosynthesis; L-histidine biosynthesis; L-histidine from 5-phospho-alpha-D-ribose 1-diphosphate: step 4/9. This is 1-(5-phosphoribosyl)-5-[(5-phosphoribosylamino)methylideneamino] imidazole-4-carboxamide isomerase from Thermotoga petrophila (strain ATCC BAA-488 / DSM 13995 / JCM 10881 / RKU-1).